The primary structure comprises 344 residues: Follistatin (344 aa).

Positions 1 to 29 (MVCARHQPGGLCLLLLLLCQFMEDRSAQA) are cleaved as a signal peptide. In terms of domain architecture, TB spans 30–103 (GNCWLRQAKN…TCENVDCGPG (74 aa)). 18 cysteine pairs are disulfide-bonded: Cys32-Cys55, Cys42-Cys88, Cys56-Cys91, Cys95-Cys106, Cys100-Cys116, Cys118-Cys150, Cys122-Cys143, Cys132-Cys164, Cys168-Cys179, Cys173-Cys189, Cys192-Cys225, Cys196-Cys218, Cys207-Cys239, Cys245-Cys256, Cys250-Cys267, Cys270-Cys302, Cys274-Cys295, and Cys284-Cys316. One can recognise a Follistatin-like 1 domain in the interval 94–117 (TCENVDCGPGKKCRMNKKNKPRCV). The Kazal-like 1 domain maps to 112–166 (NKPRCVCAPDCSNITWKGPVCGLDGKTYRNECALLKARCKEQPELEVQYQGKCKK). Residue Asn124 is glycosylated (N-linked (GlcNAc...) asparagine). One can recognise a Follistatin-like 2 domain in the interval 167–190 (TCRDVFCPGSSTCVVDQTNNAYCV). Residues 186–241 (NAYCVTCNRICPEPSSSEQYLCGNDGVTYSSACHLRKATCLLGRSIGLAYEGKCIK) form the Kazal-like 2 domain. The region spanning 244–268 (SCEDIQCGGGKKCLWDSKVGRGRCS) is the Follistatin-like 3 domain. The Kazal-like 3 domain maps to 264 to 318 (RGRCSLCDELCPDSKSDEPVCASDNATYASECAMKEAACSSGVLLEVKHSGSCNS). N-linked (GlcNAc...) asparagine glycosylation occurs at Asn288. Positions 315-344 (SCNSISEETEEEEEEEDQDYSFPISSILEW) are disordered. Residues 321-333 (EETEEEEEEEDQD) show a composition bias toward acidic residues.

Interacts with GDF11. Interacts with activin A/INHBA. Interacts with myostatin/MSTN.

It is found in the secreted. The protein localises to the nucleus. It localises to the nucleolus. In terms of biological role, multifunctional regulatory protein whose primary function is to antagonize members of the transforming growth factor beta (TGF-beta) superfamily including activin, myostatin, GDF11 or bone morphogenetic proteins (BMPs). Mechanistically, binds to these ligands in the extracellular space, blocking their type II receptor-binding site to inhibit downstream signaling. Plays an essential role in muscle fiber formation and growth both by preventing the repressive effects of myostatin and through SMAD3/AKT/mTOR signaling independently of myostatin. Also promotes neural differentiation by antagonizing the action BMP4. Acts as a specific inhibitor of the biosynthesis and secretion of pituitary follicle stimulating hormone (FSH) by sequestering activin A/INHBA. On the other hand, translocates into the nucleus where it down-regulates rRNA synthesis and ribosome biogenesis to maintain cellular energy homeostasis by binding to rDNA. The protein is Follistatin of Mus musculus (Mouse).